We begin with the raw amino-acid sequence, 393 residues long: S-adenosylmethionine synthase (393 aa).

His16 is an ATP binding site. Asp18 serves as a coordination point for Mg(2+). Glu44 contributes to the K(+) binding site. Glu57 and Gln100 together coordinate L-methionine. Positions 100–110 are flexible loop; the sequence is QSNDIAQGVDH. ATP contacts are provided by residues 167–169, 238–239, Asp247, 253–254, Ala270, and Lys274; these read DAK, RF, and RK. Asp247 contributes to the L-methionine binding site. Position 278 (Lys278) interacts with L-methionine.

This sequence belongs to the AdoMet synthase family. Homotetramer; dimer of dimers. Mg(2+) serves as cofactor. The cofactor is K(+).

It is found in the cytoplasm. The enzyme catalyses L-methionine + ATP + H2O = S-adenosyl-L-methionine + phosphate + diphosphate. It participates in amino-acid biosynthesis; S-adenosyl-L-methionine biosynthesis; S-adenosyl-L-methionine from L-methionine: step 1/1. Its function is as follows. Catalyzes the formation of S-adenosylmethionine (AdoMet) from methionine and ATP. The overall synthetic reaction is composed of two sequential steps, AdoMet formation and the subsequent tripolyphosphate hydrolysis which occurs prior to release of AdoMet from the enzyme. This is S-adenosylmethionine synthase from Variovorax paradoxus (strain S110).